The sequence spans 436 residues: ATP-dependent protease ATPase subunit HslU (436 aa).

Residues I19, 61–66, D249, E314, and R386 contribute to the ATP site; that span reads GVGKTE.

Belongs to the ClpX chaperone family. HslU subfamily. As to quaternary structure, a double ring-shaped homohexamer of HslV is capped on each side by a ring-shaped HslU homohexamer. The assembly of the HslU/HslV complex is dependent on binding of ATP.

It localises to the cytoplasm. ATPase subunit of a proteasome-like degradation complex; this subunit has chaperone activity. The binding of ATP and its subsequent hydrolysis by HslU are essential for unfolding of protein substrates subsequently hydrolyzed by HslV. HslU recognizes the N-terminal part of its protein substrates and unfolds these before they are guided to HslV for hydrolysis. The chain is ATP-dependent protease ATPase subunit HslU from Bartonella bacilliformis (strain ATCC 35685 / KC583 / Herrer 020/F12,63).